A 72-amino-acid polypeptide reads, in one-letter code: Probable transcription factor elt-4 (72 aa).

A GATA-type zinc finger spans residues 16 to 40 (CSNCNGTNTTLWRRKAEGDPVCNAC).

Its subcellular location is the nucleus. Functionally, probable transcription factor. Plays a role in regulating heme-dependent expression of heme transporter hrg-1. Modulates lifespan in a daf-16-dependent manner. The protein is Probable transcription factor elt-4 of Caenorhabditis elegans.